The sequence spans 480 residues: MLNRLRRTKIVATLGPSTDINNNLEKIIRSGVNVLRFNFSHGSKDEHKSRANQAREIMTRLNFHIALLGDLQGPKIRISKFIKNNIFLNVGDFFILDANLDQNNGNQERVGIDYKQLPYDLKVGDVLLLDDGRIQLKVIKSTGHEILTKVVIGGILSNNKGINKLGGGLSADALTEKDKKDIILATEINVDYLAISFPRCSNDLKQARKLAKEFGSNAKIIAKIERAEAVLNQNTIEDIILASDAIMIARGDLGVEIGDSELAGIQKKLIRTARQLNRIVITATQMMESMITNPLPTRAEVMDVANAVLDGSDAVMLSAETASGEYPAETVIKMAKICKGAEKVPSINVSRHRIHAKFDDIEEAIAMSAMYVANHLKGITAIITMTESGKTALMTSRITSGLPIFALSKNKETLNLASLYRGVTPIYFNSKNNNFKAANEAIVLLRKRGFLCRGELVIITQGDIMGKIGKTNTSRILKVV.

Arg-36 lines the substrate pocket. The K(+) site is built by Asn-38, Ser-40, and Asp-70. Residue 38 to 41 participates in ATP binding; it reads NFSH. Positions 77 and 160 each coordinate ATP. Glu-225 lines the Mg(2+) pocket. The substrate site is built by Gly-251, Asp-252, and Thr-284. Asp-252 provides a ligand contact to Mg(2+).

The protein belongs to the pyruvate kinase family. As to quaternary structure, homotetramer. The cofactor is Mg(2+). K(+) is required as a cofactor.

It catalyses the reaction pyruvate + ATP = phosphoenolpyruvate + ADP + H(+). Its pathway is carbohydrate degradation; glycolysis; pyruvate from D-glyceraldehyde 3-phosphate: step 5/5. Its activity is regulated as follows. Allosterically activated by AMP and by several sugar phosphates. Belongs to type II PK. In Buchnera aphidicola subsp. Acyrthosiphon pisum (strain APS) (Acyrthosiphon pisum symbiotic bacterium), this protein is Pyruvate kinase (pykA).